The chain runs to 264 residues: Thymidylate synthase (264 aa).

Arg-21 serves as a coordination point for dUMP. His-51 provides a ligand contact to (6R)-5,10-methylene-5,6,7,8-tetrahydrofolate. Residue 126–127 (RR) coordinates dUMP. Cys-146 serves as the catalytic Nucleophile. Residues 166–169 (RSCD), Asn-177, and 207–209 (HLY) contribute to the dUMP site. Asp-169 contributes to the (6R)-5,10-methylene-5,6,7,8-tetrahydrofolate binding site. A (6R)-5,10-methylene-5,6,7,8-tetrahydrofolate-binding site is contributed by Ser-263.

Belongs to the thymidylate synthase family. Bacterial-type ThyA subfamily. In terms of assembly, homodimer.

Its subcellular location is the cytoplasm. The catalysed reaction is dUMP + (6R)-5,10-methylene-5,6,7,8-tetrahydrofolate = 7,8-dihydrofolate + dTMP. It participates in pyrimidine metabolism; dTTP biosynthesis. Catalyzes the reductive methylation of 2'-deoxyuridine-5'-monophosphate (dUMP) to 2'-deoxythymidine-5'-monophosphate (dTMP) while utilizing 5,10-methylenetetrahydrofolate (mTHF) as the methyl donor and reductant in the reaction, yielding dihydrofolate (DHF) as a by-product. This enzymatic reaction provides an intracellular de novo source of dTMP, an essential precursor for DNA biosynthesis. This is Thymidylate synthase from Wigglesworthia glossinidia brevipalpis.